The chain runs to 533 residues: MSSNGDSVKYDTNFDREGYSTDSSNECPNQIDDPLNGIPNSQNSENFQLYSRNNNANELHETFPTTIPIAQQVHLSSFRNSGMVNSNSRSIGPDGSIYSIQPFDRALLQRNFIPNDEMTSNMSFVQMLNSANYDQIEPAFYQNMPGIGNSFMMQSILNPNPNDQEIDNPISDNSTYVLVQGDSNIPTNPQSNPINPTYVSLDLNDCRSNMFEYPSQTGHQYPDINGNGPRLLHCKQELSYPQTNISPFDYRLSRSMQSNTPLSSYKLSLPEIKTISNDWIKGSQNVNFNQNQLLRSTNVSDYTLIKNLPQNLPNPNQTDSIYSSSINENNQPIRNYDSPNPDREDDSEIHENPNPHDTSSVENNDNENSSSGDIGKKRKRRVLFSKKQILELERHFRQKKYLSAPEREHLANLIGLSPTQVKIWFQNHRYKMKRAHHEKALEMGNLAVNRRLNQSMFNDSKSHLPGNFELGINNSFYNSNLALGNLSLNPAVNLMGRIPGMSSMLPTYPNGSQSYFNNINQATLTGSNSSWGV.

Disordered regions lie at residues 1–28 (MSSN…NECP) and 308–378 (LPQN…GKKR). Over residues 8–19 (VKYDTNFDREGY) the composition is skewed to basic and acidic residues. Positions 308 to 317 (LPQNLPNPNQ) are enriched in low complexity. A compositionally biased stretch (polar residues) spans 318–333 (TDSIYSSSINENNQPI). The span at 360 to 371 (SVENNDNENSSS) shows a compositional bias: low complexity. Positions 377–436 (KRKRRVLFSKKQILELERHFRQKKYLSAPEREHLANLIGLSPTQVKIWFQNHRYKMKRAH) form a DNA-binding region, homeobox.

It belongs to the NK-2 homeobox family. Intestine and unidentified peripheral parenchymal cells. Slightly higher levels in the cephalic region compared to other body regions.

Its subcellular location is the nucleus. Functionally, this protein might be involved in determination and/or differentiation of nerve cells in the continuous replacement of neurons in the cephalic region. The polypeptide is Homeobox protein DTH-1 (DTH-1) (Girardia tigrina (Planarian)).